The sequence spans 173 residues: Adenine phosphoribosyltransferase (173 aa).

It belongs to the purine/pyrimidine phosphoribosyltransferase family. In terms of assembly, homodimer.

The protein localises to the cytoplasm. It carries out the reaction AMP + diphosphate = 5-phospho-alpha-D-ribose 1-diphosphate + adenine. It functions in the pathway purine metabolism; AMP biosynthesis via salvage pathway; AMP from adenine: step 1/1. Catalyzes a salvage reaction resulting in the formation of AMP, that is energically less costly than de novo synthesis. This chain is Adenine phosphoribosyltransferase, found in Thermoanaerobacter pseudethanolicus (strain ATCC 33223 / 39E) (Clostridium thermohydrosulfuricum).